Consider the following 378-residue polypeptide: Stimulator of interferon genes protein (378 aa).

Helical transmembrane passes span 21 to 41 (AAFV…EPAD) and 46 to 66 (WLVL…LCSL). Residues Cys-88 and Cys-91 are each lipidated (S-palmitoyl cysteine). 2 helical membrane passes run 89-109 (LGCP…YTFL) and 114-134 (GLPF…NILL). The interval 153-339 (FNVAHGLAWS…KHLKQEEKEE (187 aa)) is cyclic dinucleotide-binding domain (CBD). The 2',3'-cGAMP site is built by Ser-162, Tyr-167, Arg-238, and Thr-263. 3',3'-c-di-GMP contacts are provided by residues Ser-162, Tyr-167, 238-241 (RVYT), and Thr-263. 2',3'-cUAMP is bound by residues Tyr-167, Arg-238, and Thr-263. The C-terminal tail (CTT) stretch occupies residues 339-378 (EVTVGTMGSSGVLESSTLDKEPQLLISGMDQPLPLRTDVF). Residue Ser-354 is modified to Phosphoserine. Thr-355 carries the phosphothreonine modification. The pLxIS motif motif lies at 362–365 (LLIS). Phosphoserine; by TBK1 is present on Ser-365.

It belongs to the STING family. As to quaternary structure, homodimer; forms a homodimer in absence of cyclic nucleotide (c-di-GMP or cGAMP). Homotetramer; in presence of cyclic nucleotide (c-di-GMP or cGAMP), forms tetramers and higher-order oligomers through side-by-side packing. Interacts (when phosphorylated) with IRF3; following activation and phosphorylation on the pLxIS motif by TBK1, recruits IRF3. Interacts with TBK1; when homodimer, leading to subsequent production of IFN-beta. Phosphorylation by TBK1 leads to activation and production of IFN-beta. Following cyclic nucleotide (c-di-GMP or cGAMP)-binding, activation and translocation from the endoplasmic reticulum, STING1 is phosphorylated by TBK1 at Ser-365 in the pLxIS motif. The phosphorylated pLxIS motif constitutes an IRF3-binding motif, leading to recruitment of the transcription factor IRF3 to induce type-I interferons and other cytokines. In contrast, lacks phosphorylation site at position 357, leading to reduced production of type-I interferons and other cytokines.

The protein resides in the endoplasmic reticulum membrane. It localises to the cytoplasm. It is found in the perinuclear region. The protein localises to the endoplasmic reticulum-Golgi intermediate compartment membrane. Its subcellular location is the golgi apparatus membrane. The protein resides in the cytoplasmic vesicle. It localises to the autophagosome membrane. It is found in the mitochondrion outer membrane. The protein localises to the cell membrane. The catalysed reaction is H(+)(in) = H(+)(out). Facilitator of innate immune signaling that acts as a sensor of cytosolic DNA from bacteria and viruses and promotes low production of type I interferon (IFN-alpha and IFN-beta). Compared to other mammals, STING1-dependent type I interferon induction is strongly reduced in bats, suggesting that the cGAS-STING pathway promotes a limited inflammatory response. Innate immune response is triggered in response to non-CpG double-stranded DNA from viruses and bacteria delivered to the cytoplasm. Acts by binding cyclic dinucleotides: recognizes and binds cyclic di-GMP (c-di-GMP), a second messenger produced by bacteria, cyclic UMP-AMP (2',3'-cUAMP), and cyclic GMP-AMP (cGAMP), a messenger produced by CGAS in response to DNA virus in the cytosol. Upon binding to c-di-GMP, cUAMP or cGAMP, STING1 oligomerizes, translocates from the endoplasmic reticulum and is phosphorylated by TBK1 on the pLxIS motif, leading to recruitment and subsequent activation of the transcription factor IRF3 to induce expression of type I interferon and exert a potent anti-viral state. In addition to promote the production of type I interferons, plays a direct role in autophagy. Following cGAMP-binding, STING1 buds from the endoplasmic reticulum into COPII vesicles, which then form the endoplasmic reticulum-Golgi intermediate compartment (ERGIC). The ERGIC serves as the membrane source for WIPI2 recruitment and LC3 lipidation, leading to formation of autophagosomes that target cytosolic DNA or DNA viruses for degradation by the lysosome. Promotes autophagy by acting as a proton channel that directs proton efflux from the Golgi to facilitate MAP1LC3B/LC3B lipidation. The autophagy- and interferon-inducing activities can be uncoupled and autophagy induction is independent of TBK1 phosphorylation. The chain is Stimulator of interferon genes protein from Rhinolophus ferrumequinum (Greater horseshoe bat).